We begin with the raw amino-acid sequence, 65 residues long: Alpha-toxin OD1 (65 aa).

An LCN-type CS-alpha/beta domain is found at 3 to 65 (RDAYIADDKN…VPIRIPGKCR (63 aa)). Positions 9–11 (DDK) match the Important for toxin selectivity for individual Nav channel subtype (Nav1.6/SCN8A and Nav1.7/SCN9A), but not for toxin potency motif. Intrachain disulfides connect Cys-13-Cys-64, Cys-17-Cys-37, Cys-23-Cys-47, and Cys-27-Cys-49. Arg-65 is modified (arginine amide).

Belongs to the long (4 C-C) scorpion toxin superfamily. Sodium channel inhibitor family. Alpha subfamily. As to expression, expressed by the venom gland.

It is found in the secreted. In terms of biological role, alpha toxins bind voltage-independently at site-3 of sodium channels and inhibit the inactivation of the activated channels. The toxin affect mammalian sodium channels Nav1.7/SCN9A (EC(50)=4.5 nM), Nav1.4/SCN4A (EC(50)=9.6 nM), Nav1.6/SCN8A (EC(50)=30 nM), Nav1.5/SCN5A (only at micromolar concentrations), and insect sodium channel para/tipE (EC(50)=80 nM). In vivo, intraplantar administration of this toxin elicits pain behaviors, including licking and flinching of the hind paw. The chain is Alpha-toxin OD1 from Odontobuthus doriae (Yellow Iranian scorpion).